We begin with the raw amino-acid sequence, 87 residues long: Small ribosomal subunit protein uS17 (87 aa).

The protein belongs to the universal ribosomal protein uS17 family. Part of the 30S ribosomal subunit.

One of the primary rRNA binding proteins, it binds specifically to the 5'-end of 16S ribosomal RNA. The chain is Small ribosomal subunit protein uS17 from Hydrogenovibrio crunogenus (strain DSM 25203 / XCL-2) (Thiomicrospira crunogena).